The following is an 88-amino-acid chain: Small ribosomal subunit protein uS17 (88 aa).

This sequence belongs to the universal ribosomal protein uS17 family. As to quaternary structure, part of the 30S ribosomal subunit.

Functionally, one of the primary rRNA binding proteins, it binds specifically to the 5'-end of 16S ribosomal RNA. This Pseudomonas fluorescens (strain SBW25) protein is Small ribosomal subunit protein uS17.